A 121-amino-acid chain; its full sequence is UPF0102 protein Dhaf_3740 (121 aa).

It belongs to the UPF0102 family.

In Desulfitobacterium hafniense (strain DSM 10664 / DCB-2), this protein is UPF0102 protein Dhaf_3740.